The chain runs to 1226 residues: Receptor-type tyrosine-protein phosphatase O (1226 aa).

The N-terminal stretch at 1 to 29 (MGHLPRGTLGGRRLLPLLGLFVLLKIVTT) is a signal peptide. The Fibronectin type-III 1 domain occupies 30-115 (FHVAVQDDNN…TKPSRSITVL (86 aa)). At 30–832 (FHVAVQDDNN…VTEVNPNVVV (803 aa)) the chain is on the extracellular side. N-linked (GlcNAc...) asparagine glycosylation is found at Asn-75, Asn-154, and Asn-227. Residues 242 to 305 (EPSGSFPEDS…PNSTDYESTS (64 aa)) form a disordered region. Over residues 260 to 270 (IGRDRRFHFPE) the composition is skewed to basic and acidic residues. Residues 277–291 (PSNVSSGSPPSNVSS) are compositionally biased toward low complexity. Asn-279 carries an N-linked (GlcNAc...) asparagine glycan. Residues 296 to 305 (PNSTDYESTS) are compositionally biased toward polar residues. Fibronectin type-III domains are found at residues 339–435 (RTEK…ISPT), 445–541 (KPQH…IVPT), 542–638 (GIKD…TISF), 641–734 (APVA…LEPA), and 735–827 (PPKS…TEVN). 2 N-linked (GlcNAc...) asparagine glycosylation sites follow: Asn-471 and Asn-500. N-linked (GlcNAc...) asparagine glycans are attached at residues Asn-710, Asn-743, and Asn-800. The chain crosses the membrane as a helical span at residues 833–853 (ISVLAILSTLLIGLLLVTLVI). At 854 to 1226 (LRKKHLQMAR…DVIYENVSKS (373 aa)) the chain is on the cytoplasmic side. Phosphoserine is present on Ser-875. Residues 948–1205 (FSLQFEELKL…IFIHQCVQLM (258 aa)) form the Tyrosine-protein phosphatase domain. Substrate contacts are provided by residues Asp-1112, 1146-1152 (CSAGVGR), and Gln-1190. Cys-1146 acts as the Phosphocysteine intermediate in catalysis. The residue at position 1220 (Tyr-1220) is a Phosphotyrosine.

The protein belongs to the protein-tyrosine phosphatase family. Receptor class 3 subfamily. Interacts (phosphorylated form) with FYN and GRB2.

It is found in the membrane. It catalyses the reaction O-phospho-L-tyrosyl-[protein] + H2O = L-tyrosyl-[protein] + phosphate. Possesses tyrosine phosphatase activity. Plays a role in regulating the glomerular pressure/filtration rate relationship through an effect on podocyte structure and function. In Mus musculus (Mouse), this protein is Receptor-type tyrosine-protein phosphatase O (Ptpro).